Here is a 98-residue protein sequence, read N- to C-terminus: Major carboxysome shell protein CsoS1A (98 aa).

The BMC domain maps to 8-93 (ALGMIETRGL…VHSEVENILP (86 aa)).

This sequence belongs to the bacterial microcompartments protein family. CsoS1 subfamily. In terms of assembly, homohexamer with a small central pore; the concave side is mostly positive electrostatic potential, whereas the convex side is mostly negative electrostatic potential. Forms a CsoS2-CsoS1-RuBisCO complex. Interacts with the N-terminus (residues 1-136) of RuBisCO (CbbL).

The protein localises to the carboxysome. In terms of biological role, the major shell protein of the carboxysome, a polyhedral inclusion where RuBisCO (ribulose bisphosphate carboxylase, ccbL-ccbS) is sequestered. Assembles into hexamers which make sheets that form the facets of the polyhedral carboxysome. The shell probably limits the diffusion of CO(2) into and out of the carboxysome. Molecular modeling shows the central pore of this protein is selectively permeable to anions such as HCO(3) rather than CO(2) or O(2). There are estimated to be 2970 CsoS1A/CsoS1C proteins per carboxysome (the proteins differ by only 1 residue). Functionally, unlike beta-carboxysomes, alpha-carboxysomes (Cb) can form without cargo protein. CsoS2 is essential for Cb formation and is also capable of targeting foreign proteins to the Cb. The Cb shell assembles with the aid of CsoS2; CsoS1A, CsoS1B and CsoS1C form the majority of the shell while CsoS4A and CsoS4B form vertices. CsoS1D forms pseudohexamers that probably control metabolite flux into and out of the shell. The polypeptide is Major carboxysome shell protein CsoS1A (Halothiobacillus neapolitanus (strain ATCC 23641 / c2) (Thiobacillus neapolitanus)).